Here is a 482-residue protein sequence, read N- to C-terminus: tRNA sulfurtransferase (482 aa).

In terms of domain architecture, THUMP spans 61–165 (DQILAILMQT…YDHLHQVLHR (105 aa)). ATP-binding positions include 183–184 (LI), lysine 265, glycine 287, and glutamine 296. A disulfide bridge connects residues cysteine 344 and cysteine 456. Positions 404-482 (IGDGAIVLDI…GYGNIKVYRP (79 aa)) constitute a Rhodanese domain. Cysteine 456 (cysteine persulfide intermediate) is an active-site residue.

It belongs to the ThiI family.

It localises to the cytoplasm. The enzyme catalyses [ThiI sulfur-carrier protein]-S-sulfanyl-L-cysteine + a uridine in tRNA + 2 reduced [2Fe-2S]-[ferredoxin] + ATP + H(+) = [ThiI sulfur-carrier protein]-L-cysteine + a 4-thiouridine in tRNA + 2 oxidized [2Fe-2S]-[ferredoxin] + AMP + diphosphate. It carries out the reaction [ThiS sulfur-carrier protein]-C-terminal Gly-Gly-AMP + S-sulfanyl-L-cysteinyl-[cysteine desulfurase] + AH2 = [ThiS sulfur-carrier protein]-C-terminal-Gly-aminoethanethioate + L-cysteinyl-[cysteine desulfurase] + A + AMP + 2 H(+). Its pathway is cofactor biosynthesis; thiamine diphosphate biosynthesis. Catalyzes the ATP-dependent transfer of a sulfur to tRNA to produce 4-thiouridine in position 8 of tRNAs, which functions as a near-UV photosensor. Also catalyzes the transfer of sulfur to the sulfur carrier protein ThiS, forming ThiS-thiocarboxylate. This is a step in the synthesis of thiazole, in the thiamine biosynthesis pathway. The sulfur is donated as persulfide by IscS. The protein is tRNA sulfurtransferase of Photobacterium profundum (strain SS9).